A 367-amino-acid polypeptide reads, in one-letter code: Pectate lyase 1 (367 aa).

Positions 1–21 are cleaved as a signal peptide; sequence MASPCLIAVLVFLCAIVSCYS. Cys28 and Cys45 are joined by a disulfide. A beta-helix region spans residues 38–305; the sequence is NRMKLADCAV…YKKEVTKRIG (268 aa). The igE-binding. Binds to IgE in 5 out of 7 patients tested stretch occupies residues 92–104; the sequence is IFSQNMNIKLKMP. The cysteines at positions 128 and 147 are disulfide-linked. A glycan (N-linked (GlcNAc...) asparagine) is linked at Asn148. Position 170 (Asp170) interacts with Ca(2+). Asn178 carries N-linked (GlcNAc...) asparagine glycosylation. The Ca(2+) site is built by Asp194 and Asp198. Positions 239 to 250 are igE-binding. Binds to IgE in 6 out of 7 patients tested; the sequence is AFNQFGPNAGQR. Arg250 is a catalytic residue. The segment at 251–258 is igE-binding. Binds to IgE in 5 out of 7 patients tested; it reads MPRARYGL. Cysteines 306 and 312 form a disulfide. Positions 317–327 are igE-binding. Binds to IgE in 3 out of 7 patients tested; the sequence is WRSTRDAFING.

It belongs to the polysaccharide lyase 1 family. Amb a subfamily. The cofactor is Ca(2+). N-glycosylated; consists of complex-type N-glycans containing the Lewis a antigen (Galbeta1-3(Fucalpha1-4)GlcNAcbeta1-). Expressed in pollen (at protein level).

It catalyses the reaction Eliminative cleavage of (1-&gt;4)-alpha-D-galacturonan to give oligosaccharides with 4-deoxy-alpha-D-galact-4-enuronosyl groups at their non-reducing ends.. It functions in the pathway glycan metabolism; pectin degradation; 2-dehydro-3-deoxy-D-gluconate from pectin: step 2/5. In terms of biological role, has low pectate lyase activity. The polypeptide is Pectate lyase 1 (Juniperus ashei (Ozark white cedar)).